The primary structure comprises 150 residues: SsrA-binding protein (150 aa).

It belongs to the SmpB family.

It localises to the cytoplasm. Functionally, required for rescue of stalled ribosomes mediated by trans-translation. Binds to transfer-messenger RNA (tmRNA), required for stable association of tmRNA with ribosomes. tmRNA and SmpB together mimic tRNA shape, replacing the anticodon stem-loop with SmpB. tmRNA is encoded by the ssrA gene; the 2 termini fold to resemble tRNA(Ala) and it encodes a 'tag peptide', a short internal open reading frame. During trans-translation Ala-aminoacylated tmRNA acts like a tRNA, entering the A-site of stalled ribosomes, displacing the stalled mRNA. The ribosome then switches to translate the ORF on the tmRNA; the nascent peptide is terminated with the 'tag peptide' encoded by the tmRNA and targeted for degradation. The ribosome is freed to recommence translation, which seems to be the essential function of trans-translation. This is SsrA-binding protein from Rubrobacter xylanophilus (strain DSM 9941 / JCM 11954 / NBRC 16129 / PRD-1).